The following is a 312-amino-acid chain: DNA primase small subunit PriS (312 aa).

Residues Asp-88, Asp-90, and Asp-215 contribute to the active site.

This sequence belongs to the eukaryotic-type primase small subunit family. In terms of assembly, heterodimer of a small subunit (PriS) and a large subunit (PriL). Requires Mg(2+) as cofactor. The cofactor is Mn(2+).

Catalytic subunit of DNA primase, an RNA polymerase that catalyzes the synthesis of short RNA molecules used as primers for DNA polymerase during DNA replication. The small subunit contains the primase catalytic core and has DNA synthesis activity on its own. Binding to the large subunit stabilizes and modulates the activity, increasing the rate of DNA synthesis while decreasing the length of the DNA fragments, and conferring RNA synthesis capability. The DNA polymerase activity may enable DNA primase to also catalyze primer extension after primer synthesis. May also play a role in DNA repair. The chain is DNA primase small subunit PriS from Pyrobaculum arsenaticum (strain DSM 13514 / JCM 11321 / PZ6).